Reading from the N-terminus, the 101-residue chain is Small ribosomal subunit protein bS18c (101 aa).

Residues 1 to 19 are compositionally biased toward basic residues; that stretch reads MDKSKQPFHKTKRSFRRRL. The interval 1–23 is disordered; that stretch reads MDKSKQPFHKTKRSFRRRLPPIG.

The protein belongs to the bacterial ribosomal protein bS18 family. As to quaternary structure, part of the 30S ribosomal subunit.

It localises to the plastid. The protein localises to the chloroplast. The chain is Small ribosomal subunit protein bS18c from Lemna minor (Common duckweed).